A 159-amino-acid chain; its full sequence is NADH-quinone oxidoreductase subunit B (159 aa).

Cysteine 36, cysteine 37, cysteine 102, and cysteine 132 together coordinate [4Fe-4S] cluster.

The protein belongs to the complex I 20 kDa subunit family. NDH-1 is composed of 14 different subunits. Subunits NuoB, C, D, E, F, and G constitute the peripheral sector of the complex. [4Fe-4S] cluster serves as cofactor.

The protein resides in the cell inner membrane. The enzyme catalyses a quinone + NADH + 5 H(+)(in) = a quinol + NAD(+) + 4 H(+)(out). In terms of biological role, NDH-1 shuttles electrons from NADH, via FMN and iron-sulfur (Fe-S) centers, to quinones in the respiratory chain. Couples the redox reaction to proton translocation (for every two electrons transferred, four hydrogen ions are translocated across the cytoplasmic membrane), and thus conserves the redox energy in a proton gradient. This Delftia acidovorans (strain DSM 14801 / SPH-1) protein is NADH-quinone oxidoreductase subunit B.